Here is a 93-residue protein sequence, read N- to C-terminus: MVTKEQVEASLTSKLKPIHLEVIDISGGCGSSFEVEVVSEQFEGKRLLERHRMVNAALEEEMKEIHALSIKKAQTPQQWKPPSQDSATLTKDA.

Cys29 bears the S-glutathionyl cysteine; transient; alternate mark. The disordered stretch occupies residues 72–93 (KAQTPQQWKPPSQDSATLTKDA).

Belongs to the bolA/yrbA family. As to quaternary structure, homodimer. Interacts in vitro with GRXS14, GRXS15, GRXS16 and GRXS17, but not with GRXC5. Interacts in vivo only with GRXS17. Can be either glutathionylated or forming covalent homodimers, depending on the oxidation state.

The protein localises to the cytoplasm. Its subcellular location is the nucleus. May act either alone or in interaction with glutaredoxin as a redox-regulated transcriptional regulator, or as a factor regulating Fe-S cluster biogenesis. The GRXS17-BOLA2 heterodimer binds a labile, oxygen sensitive iron-sulfur cluster. The protein is Protein BOLA2 of Arabidopsis thaliana (Mouse-ear cress).